Reading from the N-terminus, the 295-residue chain is MEKMSRQLPLNPTFIPPPYGVLRSLLENPLKLPLHPEDAFSKDRDKGKKLDDGSNSPTVPQSAFLGPTLWDKTLPYDGDTFQLEYMDLEEFLSENGIPPSPSQHDHSPHPPGLQPASSTAPSVMDLSSRATAPLHPGIPSPNCMQNPIRPGQLLPANRNTPSPIDPDTIQVPVGYEPDPADLALSSIPGPEMFDPRKRKFSEEELKPQPMIKKARKVFIPDDLKDDKYWARRRKNNMAAKRSRDARRLKENQIAIRASFLEKENSALRQEVADLRKELGKCKNILAKYEARHGPL.

The span at 34–52 (LHPEDAFSKDRDKGKKLDD) shows a compositional bias: basic and acidic residues. Disordered regions lie at residues 34–69 (LHPEDAFSKDRDKGKKLDDGSNSPTVPQSAFLGPTL) and 93–160 (SENG…NRNT). The bZIP domain maps to 225–288 (DDKYWARRRK…GKCKNILAKY (64 aa)). The tract at residues 227–247 (KYWARRRKNNMAAKRSRDARR) is basic motif. Positions 248 to 255 (LKENQIAI) are leucine-zipper.

This sequence belongs to the bZIP family. PAR subfamily. In terms of assembly, binds DNA specifically as homodimer or heterodimer with other PAR factors. In terms of tissue distribution, isoform HLF43 is abundant in brain, liver and kidney. Isoform HLF36 is expressed only in the liver. Both isoforms accumulate in the liver with different circadian amplitudes. Isoform HLF36 reaches peak expression levels between 8 and 12 p.m. Isoform HLF43 displays a more pronounced fluctuation through the day.

The protein resides in the nucleus. The sequence is that of Hepatic leukemia factor (Hlf) from Rattus norvegicus (Rat).